A 129-amino-acid polypeptide reads, in one-letter code: Glycine cleavage system H protein (129 aa).

The region spanning 24 to 106 is the Lipoyl-binding domain; it reads TFTVGISEHA…YGDGWLFRIK (83 aa). Lysine 65 carries the post-translational modification N6-lipoyllysine.

It belongs to the GcvH family. As to quaternary structure, the glycine cleavage system is composed of four proteins: P, T, L and H. The cofactor is (R)-lipoate.

Functionally, the glycine cleavage system catalyzes the degradation of glycine. The H protein shuttles the methylamine group of glycine from the P protein to the T protein. The chain is Glycine cleavage system H protein from Idiomarina loihiensis (strain ATCC BAA-735 / DSM 15497 / L2-TR).